Reading from the N-terminus, the 225-residue chain is UPF0700 transmembrane protein YoaK (225 aa).

6 helical membrane-spanning segments follow: residues 10–30 (LLSL…LSLG), 56–76 (VFNS…ATLM), 99–119 (ILFV…HILI), 137–157 (GIAG…LEDI), 174–194 (TVLR…VALA), and 197–217 (DFYH…MMTA).

It belongs to the UPF0700 family.

It localises to the cell membrane. The chain is UPF0700 transmembrane protein YoaK (yoaK) from Bacillus subtilis (strain 168).